The primary structure comprises 158 residues: 2-C-methyl-D-erythritol 2,4-cyclodiphosphate synthase (158 aa).

A divalent metal cation contacts are provided by D10 and H12. 4-CDP-2-C-methyl-D-erythritol 2-phosphate is bound by residues 10–12 and 36–37; these read DVH and HS. H44 serves as a coordination point for a divalent metal cation. Residues 58–60, 63–67, and R144 each bind 4-CDP-2-C-methyl-D-erythritol 2-phosphate; these read DIG and FSDTD.

The protein belongs to the IspF family. In terms of assembly, homotrimer. The cofactor is a divalent metal cation.

It carries out the reaction 4-CDP-2-C-methyl-D-erythritol 2-phosphate = 2-C-methyl-D-erythritol 2,4-cyclic diphosphate + CMP. It participates in isoprenoid biosynthesis; isopentenyl diphosphate biosynthesis via DXP pathway; isopentenyl diphosphate from 1-deoxy-D-xylulose 5-phosphate: step 4/6. Involved in the biosynthesis of isopentenyl diphosphate (IPP) and dimethylallyl diphosphate (DMAPP), two major building blocks of isoprenoid compounds. Catalyzes the conversion of 4-diphosphocytidyl-2-C-methyl-D-erythritol 2-phosphate (CDP-ME2P) to 2-C-methyl-D-erythritol 2,4-cyclodiphosphate (ME-CPP) with a corresponding release of cytidine 5-monophosphate (CMP). The polypeptide is 2-C-methyl-D-erythritol 2,4-cyclodiphosphate synthase (Burkholderia vietnamiensis (strain G4 / LMG 22486) (Burkholderia cepacia (strain R1808))).